Consider the following 392-residue polypeptide: Phosphoglycerate kinase (392 aa).

Substrate is bound by residues 21-23 (DFN), R36, 59-62 (HLGR), R113, and R146. ATP is bound by residues K197, E319, and 345–348 (GGDT).

This sequence belongs to the phosphoglycerate kinase family. In terms of assembly, monomer.

The protein localises to the cytoplasm. The enzyme catalyses (2R)-3-phosphoglycerate + ATP = (2R)-3-phospho-glyceroyl phosphate + ADP. The protein operates within carbohydrate degradation; glycolysis; pyruvate from D-glyceraldehyde 3-phosphate: step 2/5. The protein is Phosphoglycerate kinase of Francisella tularensis subsp. holarctica (strain FTNF002-00 / FTA).